Consider the following 141-residue polypeptide: MNASEKLSQKAAQSVTRRFITWLKSPDFRKYLCSTHFWGPLSNFGIPIAAILDLKKDPRLISGRMTGALILYSSVFMRYAWMVSPRNYLLLGCHAFNTTVQTAQGIRFVNFWYGKEGASKQSVFENIMQAAKHPESGTRQK.

The next 2 membrane-spanning stretches (helical) occupy residues 31 to 52 (YLCSTHFWGPLSNFGIPIAAIL) and 60 to 82 (LISGRMTGALILYSSVFMRYAWM).

Belongs to the mitochondrial pyruvate carrier (MPC) (TC 2.A.105) family. As to quaternary structure, the functional 150 kDa pyruvate import complex is a heteromer of mpc1 and mpc2.

The protein resides in the mitochondrion. It localises to the mitochondrion inner membrane. Its function is as follows. Mediates the uptake of pyruvate into mitochondria. The chain is Probable mitochondrial pyruvate carrier 1 from Schizosaccharomyces pombe (strain 972 / ATCC 24843) (Fission yeast).